A 149-amino-acid chain; its full sequence is UPF0178 protein HEAR0259 (149 aa).

Belongs to the UPF0178 family.

The chain is UPF0178 protein HEAR0259 from Herminiimonas arsenicoxydans.